The primary structure comprises 410 residues: Arginine biosynthesis bifunctional protein ArgJ (410 aa).

T160, K186, T197, E283, N405, and T410 together coordinate substrate. T197 serves as the catalytic Nucleophile.

Belongs to the ArgJ family. Heterotetramer of two alpha and two beta chains.

It localises to the cytoplasm. It catalyses the reaction N(2)-acetyl-L-ornithine + L-glutamate = N-acetyl-L-glutamate + L-ornithine. The enzyme catalyses L-glutamate + acetyl-CoA = N-acetyl-L-glutamate + CoA + H(+). It participates in amino-acid biosynthesis; L-arginine biosynthesis; L-ornithine and N-acetyl-L-glutamate from L-glutamate and N(2)-acetyl-L-ornithine (cyclic): step 1/1. It functions in the pathway amino-acid biosynthesis; L-arginine biosynthesis; N(2)-acetyl-L-ornithine from L-glutamate: step 1/4. Its activity is regulated as follows. Competitively inhibited by L-ornithine. Functionally, catalyzes two activities which are involved in the cyclic version of arginine biosynthesis: the synthesis of N-acetylglutamate from glutamate and acetyl-CoA as the acetyl donor, and of ornithine by transacetylation between N(2)-acetylornithine and glutamate. The sequence is that of Arginine biosynthesis bifunctional protein ArgJ from Geobacillus stearothermophilus (Bacillus stearothermophilus).